The sequence spans 169 residues: Protein AIG2 B (169 aa).

Tyr-15–Glu-20 lines the substrate pocket. The Proton acceptor role is filled by Glu-83.

The protein belongs to the gamma-glutamylcyclotransferase family. Expressed in roots, leaves and stems.

Putative gamma-glutamylcyclotransferase. The protein is Protein AIG2 B of Arabidopsis thaliana (Mouse-ear cress).